The primary structure comprises 193 residues: Major structural subunit of bundle-forming pilus (193 aa).

The propeptide at 1–13 (MVSKIMNKKYEKG) is leader sequence. Leu-14 carries the post-translational modification N-methylleucine. The chain crosses the membrane as a helical span at residues 14 to 35 (LSLIESAMVLALAATVTAGVMF). An intrachain disulfide couples Cys-129 to Cys-179.

The protein belongs to the N-Me-Phe pilin family. 10 to 100 laterally aligned filaments or bundle-forming pili coalesce into rope-like bundles. These form linkages between the bacteria within the enteropathogenic E.coli (EPEC) microcolonies that are attached to epithelial cells.

It localises to the fimbrium. The protein localises to the membrane. Functionally, major component of type IV bundle-forming pili (BFP) that plays a role in adherence to host cells and virulence. In Escherichia coli O127:H6 (strain E2348/69 / EPEC), this protein is Major structural subunit of bundle-forming pilus (bfpA).